The primary structure comprises 1215 residues: Metabotropic glycine receptor (1215 aa).

The N-terminal stretch at 1 to 23 is a signal peptide; sequence MGAMAYPLLLCLLLAQLGLGAVG. The segment at 23–66 is disordered; the sequence is GASRDPQGRPDSPRERTPKGKPHAQQPGRASASDSSAPWSRSTD. Over 24 to 417 the chain is Extracellular; it reads ASRDPQGRPD…CFVQEDKYLR (394 aa). Residues 28–40 show a composition bias toward basic and acidic residues; the sequence is PQGRPDSPRERTP. A compositionally biased stretch (low complexity) spans 52–64; that stretch reads ASASDSSAPWSRS. Positions 85 to 281 are cache-like region; sequence YLYTGDSHQL…CENGSYKPGW (197 aa). N98 and N143 each carry an N-linked (GlcNAc...) asparagine glycan. The cysteines at positions 99 and 272 are disulfide-linked. Positions 172 and 173 each coordinate glycine. The N-linked (GlcNAc...) asparagine glycan is linked to N215. E271 is a binding site for glycine. The N-linked (GlcNAc...) asparagine glycan is linked to N274. Residue D307 participates in glycine binding. An N-linked (GlcNAc...) asparagine glycan is attached at N333. A helical membrane pass occupies residues 418–439; it reads LAIISFQALCMLLDFVSMLVVY. Residues 440-451 are Cytoplasmic-facing; that stretch reads HFRKAKSIRASG. The helical transmembrane segment at 452–474 threads the bilayer; that stretch reads LILLETILFGSLLLYFPVVILYF. The Extracellular segment spans residues 475–478; it reads EPST. Residues 479 to 501 form a helical membrane-spanning segment; the sequence is FRCILLRWARLLGFATVYGTVTL. C481 and C573 are joined by a disulfide. Residues 502–525 lie on the Cytoplasmic side of the membrane; that stretch reads KLHRVLKVFLSRTAQRIPYMTGGR. A helical transmembrane segment spans residues 526–547; sequence VMRMLAVILLVVFWFLIGWTSS. Residues 548–576 are Extracellular-facing; sequence VCQNLEKQISLIGQGKTSDHLIFNMCLID. The helical transmembrane segment at 577-597 threads the bilayer; sequence RWDYMTAVAEFLFLLWGVYLC. Residues 598 to 611 lie on the Cytoplasmic side of the membrane; that stretch reads YAVRTVPSAFHEPR. Residues 612–633 traverse the membrane as a helical segment; the sequence is YMAVAVHNELIISAIFHTIRFV. The Extracellular portion of the chain corresponds to 634–642; that stretch reads LASRLQSDW. A helical transmembrane segment spans residues 643–664; that stretch reads MLMLYFAHTHLTVTVTIGLLLI. At 665 to 1215 the chain is on the cytoplasmic side; sequence PKFSHSSNNP…KEEIWDSFKV (551 aa). Residues S694, S705, and S708 each carry the phosphoserine modification. The segment at 757–999 is disordered; sequence RITEIPETVS…LNPGTTQMKD (243 aa). Basic and acidic residues-rich tracts occupy residues 769–781 and 819–828; these read CSKE…DHGT and STYDHVRDQT. K774 participates in a covalent cross-link: Glycyl lysine isopeptide (Lys-Gly) (interchain with G-Cter in ubiquitin). S865 bears the Phosphoserine mark. Residues 925–943 are compositionally biased toward basic and acidic residues; it reads VEERTKSQKPLPKDKETNR. Residue S946 is modified to Phosphoserine. The segment covering 979 to 998 has biased composition (polar residues); it reads QRVNPTTANSDLNPGTTQMK. Short sequence motifs (VCPWE motif) lie at residues 1006–1010 and 1071–1075; these read VCPWE and VCLWE. At S1080 the chain carries Phosphoserine. The interval 1117-1164 is disordered; that stretch reads SEELPPKAVASKTENENLNQIGHQEKKTSSSEENVRGSYNSSNNFQQP. Basic and acidic residues predominate over residues 1139–1151; the sequence is HQEKKTSSSEENV. The segment covering 1153-1164 has biased composition (polar residues); sequence GSYNSSNNFQQP. The short motif at 1171–1175 is the VCPWE motif 3 element; sequence VCPWE.

This sequence belongs to the G-protein coupled receptor 3 family. Homodimer. Associates with the RGS7-GNB5 complex, promoting its localization to the cell membrane and regulating its GTPase activator activity. Interacts (via VCPWE motifs) with GNAO1. Interacts with GPC4. Interacts with EGFLAM.

It is found in the cell membrane. The protein localises to the postsynaptic cell membrane. It localises to the presynaptic cell membrane. Its subcellular location is the nucleus. Functionally, metabotropic receptor for glycine that controls synapse formation and function in the brain. Acts as an atypical G-protein coupled receptor that recruits and regulates the RGS7-GNB5 complex instead of activating G proteins. In absence of glycine ligand, promotes the GTPase activator activity of RGS7, increasing the GTPase activity of G protein alpha subunits, thereby driving them into their inactive GDP-bound form. Glycine-binding changes the conformation of the intracellular surface, inhibiting the GTPase activator activity of the RGS7-GNB5 complex, promoting G protein alpha subunits into their active GTP-bound form and regulating cAMP levels. Also able to bind taurine, a compound closely related to glycine, but with a two-fold lower affinity. Glycine receptor-dependent regulation of cAMP controls key ion channels, kinases and neurotrophic factors involved in neuronal excitability and synaptic transmission. Plays a pivotal role in regulating mood and cognition via its ability to regulate neuronal excitability in L2/L3 pyramidal neurons of the prefrontal cortex. Also involved in spatial learning by regulating hippocampal CA1 neuronal excitability. Acts as a synaptic organizer in the hippocampus, required for proper mossy fiber-CA3 neurocircuitry establishment, structure and function: induces presynaptic differentiation in contacting axons via its interaction with GPC4. In addition to glycine, may also act as a receptor for osteocalcin (BGLAP) hormone: osteocalcin-binding initiates a signaling response that prevents neuronal apoptosis in the hippocampus and regulates the synthesis of neurotransmitters. This chain is Metabotropic glycine receptor, found in Homo sapiens (Human).